A 1303-amino-acid polypeptide reads, in one-letter code: Ninein-like protein (1303 aa).

EF-hand domains are found at residues 8-43 (RYVA…LSLD) and 61-77 (RVNF…VLSR). The segment at 107-135 (TKRYGRRSRPDKTDLELTADSDSLPFGTD) is disordered. EF-hand domains follow at residues 203 to 238 (VTDG…IGLK) and 240 to 275 (LEAE…PHDH). The Ca(2+) site is built by aspartate 253, aspartate 255, aspartate 257, lysine 259, and glutamate 264. Residues 464-590 (EYESEVLLEQ…CSELELLKSQ (127 aa)) adopt a coiled-coil conformation. A compositionally biased stretch (polar residues) spans 592 to 617 (SGKRTRLSRSSLPANDWSNRRALTTE). Residues 592–634 (SGKRTRLSRSSLPANDWSNRRALTTESDSDDPEMKKGTSPQVR) are disordered. Coiled-coil stretches lie at residues 660–791 (ELAM…LEAE), 821–876 (LAVL…LSAR), and 919–1146 (SKQL…VQAQ). The segment at 1156–1181 (EQMGSGTQEHASHLQTQLAEQQRRTQ) is disordered. Residues 1159–1175 (GSGTQEHASHLQTQLAE) show a composition bias toward polar residues. A coiled-coil region spans residues 1202–1278 (QEQYEKLMAS…EQRQKSAEKK (77 aa)).

Its subcellular location is the cytoplasm. The protein localises to the cytoskeleton. The protein resides in the microtubule organizing center. It localises to the centrosome. Functionally, required for the intracellular transport of organelles and vesicles, and is essential for the photoreceptor's outer segments formation, maintenance and function. The protein is Ninein-like protein (Ninl) of Danio rerio (Zebrafish).